The following is a 231-amino-acid chain: ATP phosphoribosyltransferase (231 aa).

The protein belongs to the ATP phosphoribosyltransferase family. Short subfamily. As to quaternary structure, heteromultimer composed of HisG and HisZ subunits.

The protein localises to the cytoplasm. It catalyses the reaction 1-(5-phospho-beta-D-ribosyl)-ATP + diphosphate = 5-phospho-alpha-D-ribose 1-diphosphate + ATP. The protein operates within amino-acid biosynthesis; L-histidine biosynthesis; L-histidine from 5-phospho-alpha-D-ribose 1-diphosphate: step 1/9. Catalyzes the condensation of ATP and 5-phosphoribose 1-diphosphate to form N'-(5'-phosphoribosyl)-ATP (PR-ATP). Has a crucial role in the pathway because the rate of histidine biosynthesis seems to be controlled primarily by regulation of HisG enzymatic activity. The polypeptide is ATP phosphoribosyltransferase (Brucella melitensis biotype 2 (strain ATCC 23457)).